The sequence spans 300 residues: D-alanine--D-alanine ligase (300 aa).

Residues 99-293 (KKILKYANIN…FAELLNSIVK (195 aa)) form the ATP-grasp domain. 126-181 (IEKIGYPVFVKPNSGGSSVATNLVKDKEGIKEAVELALKYDKEVMIENYTKGEEIT) contacts ATP. Positions 248, 260, and 262 each coordinate Mg(2+).

Belongs to the D-alanine--D-alanine ligase family. It depends on Mg(2+) as a cofactor. Mn(2+) serves as cofactor.

The protein resides in the cytoplasm. It catalyses the reaction 2 D-alanine + ATP = D-alanyl-D-alanine + ADP + phosphate + H(+). It functions in the pathway cell wall biogenesis; peptidoglycan biosynthesis. Functionally, cell wall formation. This is D-alanine--D-alanine ligase from Clostridium botulinum (strain Langeland / NCTC 10281 / Type F).